The chain runs to 1083 residues: Solute carrier family 12 member 7 (1083 aa).

A disordered region spans residues 1–51; the sequence is MPTNFTVVPVEARADGAGDEAAERTEEPGSPESADPACPTPGDGNPRENSP. Topologically, residues 1-119 are cytoplasmic; it reads MPTNFTVVPV…RREIKAPRMG (119 aa). Over residues 12–27 the composition is skewed to basic and acidic residues; the sequence is ARADGAGDEAAERTEE. S30, S33, S50, and S62 each carry phosphoserine. Residues 120–142 traverse the membrane as a discontinuously helical segment; that stretch reads TFIGVYLPCLQNILGVILFLRLT. Residues N131 and I132 each contribute to the K(+) site. A chloride-binding site is contributed by V135. Residues 143 to 149 lie on the Extracellular side of the membrane; the sequence is WIVGAAG. Residues 150–172 traverse the membrane as a helical segment; the sequence is VLESFLIVAMCCTCTMLTAISMS. Topologically, residues 173-196 are cytoplasmic; the sequence is AIATNGVVPAGGSYYMISRSLGPE. The helical transmembrane segment at 197-225 threads the bilayer; sequence FGGAVGLCFYLGTTFAGAMYILGTIEIFL. Over 226 to 249 the chain is Extracellular; sequence TYISPSAAIFQAETADGEAAALLN. Transmembrane regions (helical) follow at residues 250–271 and 272–300; these read NMRV…VGVK and YVNK…KTAF. Residues 301-419 lie on the Extracellular side of the membrane; sequence APPDIPVCLL…PYVLTDIMTY (119 aa). N-linked (GlcNAc...) asparagine glycans are attached at residues N312, N331, and N360. The chain crosses the membrane as a helical span at residues 420 to 440; the sequence is FTMLVGIYFPSVTGIMAGSNR. Residues P429 and T432 each contribute to the K(+) site. Position 429 (P429) interacts with chloride. Positions 433 and 434 each coordinate chloride. At 441–450 the chain is on the cytoplasmic side; it reads SGDLKDAQKS. A helical transmembrane segment spans residues 451-473; that stretch reads IPTGTILAIVTTSFIYLSCIVLF. At 474 to 504 the chain is on the extracellular side; the sequence is GACIEGVVLRDKFGEALQGNLVIGMLAWPSP. Residues 505 to 531 form a helical membrane-spanning segment; it reads WVIVIGSFFSTCGAGLQSLTGAPRLLQ. Residues 532 to 554 lie on the Cytoplasmic side of the membrane; sequence AIARDGIIPFLQVFGHGKANGEP. Helical transmembrane passes span 555–573 and 574–598; these read TWAL…LIAS and LDSV…ACAV. Position 589 (Y589) interacts with chloride. The Cytoplasmic segment spans residues 599–612; that stretch reads QTLLRTPNWRPRFK. A run of 2 helical transmembrane segments spans residues 613–635 and 636–651; these read FYHW…ICSW and YYAL…IYKY. Topologically, residues 652–1083 are cytoplasmic; it reads IEYRGAEKEW…GGREVITIYS (432 aa). The segment at 664 to 680 is scissor helix; it reads GIRGLSLNAARYALLRV. Residues T973 and T980 each carry the phosphothreonine modification.

Belongs to the SLC12A transporter family. K/Cl co-transporter subfamily. In terms of assembly, homodimer; adopts a domain-swap conformation at the scissor helices connecting the transmembrane domain and C-terminal domain. Heterodimer with K-Cl cotransporter SLC12A5. Widely expressed with highest levels in kidney, liver and pancreas. Expressed in choroid plexus and suprachiasmatic nucleus.

The protein localises to the cell membrane. It catalyses the reaction K(+)(in) + chloride(in) = K(+)(out) + chloride(out). Activated by N-ethylmaleimide (NEM). Inhibited by furosemide, DIDS and bumetanide. The inhibition is much stronger in the presence of 50 mM K(+) in the uptake medium. Inhibited by DIOA. Inhibited by WNK3. Mediates electroneutral potassium-chloride cotransport when activated by cell swelling. May mediate K(+) uptake into Deiters' cells in the cochlea and contribute to K(+) recycling in the inner ear. Important for the survival of cochlear outer and inner hair cells and the maintenance of the organ of Corti. May be required for basolateral Cl(-) extrusion in the kidney and contribute to renal acidification. The protein is Solute carrier family 12 member 7 of Rattus norvegicus (Rat).